Consider the following 559-residue polypeptide: Amino-acid acetyltransferase, mitochondrial (559 aa).

The segment at 162-188 (RLGPKPGSEDPTSELDFTPPETHTLPP) is disordered. An N-acetyltransferase domain is found at 362-538 (LPVQVFHSVS…GSAGLSYVED (177 aa)).

It belongs to the acetyltransferase family.

Its subcellular location is the mitochondrion. It carries out the reaction L-glutamate + acetyl-CoA = N-acetyl-L-glutamate + CoA + H(+). It participates in amino-acid biosynthesis; L-arginine biosynthesis; N(2)-acetyl-L-ornithine from L-glutamate: step 1/4. N-acetylglutamate synthase involved in arginine biosynthesis. In Laccaria bicolor (strain S238N-H82 / ATCC MYA-4686) (Bicoloured deceiver), this protein is Amino-acid acetyltransferase, mitochondrial (ARG2).